Reading from the N-terminus, the 258-residue chain is tRNA pseudouridine synthase A (258 aa).

Aspartate 52 functions as the Nucleophile in the catalytic mechanism. Tyrosine 110 contributes to the substrate binding site.

The protein belongs to the tRNA pseudouridine synthase TruA family. In terms of assembly, homodimer.

The catalysed reaction is uridine(38/39/40) in tRNA = pseudouridine(38/39/40) in tRNA. Functionally, formation of pseudouridine at positions 38, 39 and 40 in the anticodon stem and loop of transfer RNAs. The chain is tRNA pseudouridine synthase A from Francisella tularensis subsp. mediasiatica (strain FSC147).